The chain runs to 269 residues: Hemin import ATP-binding protein HmuV (269 aa).

The 238-residue stretch at 5-242 (LDAEAASFAI…SLIRRVFDIA (238 aa)) folds into the ABC transporter domain. Residue 37-44 (GPNGAGKS) coordinates ATP.

This sequence belongs to the ABC transporter superfamily. Heme (hemin) importer (TC 3.A.1.14.5) family. The complex is composed of two ATP-binding proteins (HmuV), two transmembrane proteins (HmuU) and a solute-binding protein (HmuT).

It localises to the cell inner membrane. Functionally, part of the ABC transporter complex HmuTUV involved in hemin import. Responsible for energy coupling to the transport system. In Rhodopseudomonas palustris (strain BisB18), this protein is Hemin import ATP-binding protein HmuV.